The sequence spans 216 residues: Large ribosomal subunit protein uL3 (216 aa).

The disordered stretch occupies residues 119–143; sequence GYQGNIHKDGQSRGPMAHGSRYHRR.

It belongs to the universal ribosomal protein uL3 family. In terms of assembly, part of the 50S ribosomal subunit. Forms a cluster with proteins L14 and L19.

One of the primary rRNA binding proteins, it binds directly near the 3'-end of the 23S rRNA, where it nucleates assembly of the 50S subunit. This Levilactobacillus brevis (strain ATCC 367 / BCRC 12310 / CIP 105137 / JCM 1170 / LMG 11437 / NCIMB 947 / NCTC 947) (Lactobacillus brevis) protein is Large ribosomal subunit protein uL3.